A 145-amino-acid chain; its full sequence is Probable disulfide formation protein (145 aa).

Residues 9–28 (ENLLLLIWVQAFLALAGSLF) traverse the membrane as a helical segment. A disulfide bond links C38 and C41. 2 helical membrane-spanning segments follow: residues 43–62 (YQRI…AIKK) and 69–86 (PGLF…YHYL). A disulfide bridge connects residues C100 and C106. A helical transmembrane segment spans residues 115-137 (GFISIPFMAGVAFLIIFVLHLLI).

This sequence belongs to the DsbB family. BdbC subfamily.

It is found in the cell membrane. Its function is as follows. Required for disulfide bond formation in some proteins. In Oceanobacillus iheyensis (strain DSM 14371 / CIP 107618 / JCM 11309 / KCTC 3954 / HTE831), this protein is Probable disulfide formation protein.